Consider the following 321-residue polypeptide: Beta-lactamase (321 aa).

Positions 1-30 (MEKNRKKQIVVLSIALVCIFILVFSLFHKS) are cleaved as a signal peptide. Ser83 serves as the catalytic Acyl-ester intermediate. Residue 233-235 (KTG) participates in substrate binding.

This sequence belongs to the class-A beta-lactamase family.

The enzyme catalyses a beta-lactam + H2O = a substituted beta-amino acid. Inhibited by clavulanic acid. Can hydrolyze cephalosporins, penicillins and also cefoxitin; but at a slow rate. The polypeptide is Beta-lactamase (cfxA) (Phocaeicola vulgatus (Bacteroides vulgatus)).